The following is a 296-amino-acid chain: tRNA dimethylallyltransferase (296 aa).

9–16 contacts ATP; the sequence is GTTASGKS. 11–16 contributes to the substrate binding site; the sequence is TASGKS. Residues 34–37 form an interaction with substrate tRNA region; sequence DSLA.

This sequence belongs to the IPP transferase family. As to quaternary structure, monomer. Mg(2+) is required as a cofactor.

It catalyses the reaction adenosine(37) in tRNA + dimethylallyl diphosphate = N(6)-dimethylallyladenosine(37) in tRNA + diphosphate. Functionally, catalyzes the transfer of a dimethylallyl group onto the adenine at position 37 in tRNAs that read codons beginning with uridine, leading to the formation of N6-(dimethylallyl)adenosine (i(6)A). This chain is tRNA dimethylallyltransferase, found in Campylobacter curvus (strain 525.92).